Reading from the N-terminus, the 597-residue chain is Sialic acid-binding Ig-like lectin 12 (597 aa).

The first 20 residues, 1–20 (MLLLLLLLLLPPLLCGRVGA), serve as a signal peptide directing secretion. Ig-like V-type domains are found at residues 21–144 (KEQK…VNVT) and 145–271 (ASQD…VHVT). At 21–483 (KEQKDYLLTM…RPISGVTLGA (463 aa)) the chain is on the extracellular side. A disulfide bridge connects residues cysteine 46 and cysteine 106. Asparagine 142, asparagine 181, asparagine 232, and asparagine 292 each carry an N-linked (GlcNAc...) asparagine glycan. 3 cysteine pairs are disulfide-bonded: cysteine 168–cysteine 301, cysteine 173–cysteine 233, and cysteine 295–cysteine 344. In terms of domain architecture, Ig-like C2-type 1 spans 277-360 (PTFSIPGTLE…AGVTTTRAVR (84 aa)). N-linked (GlcNAc...) asparagine glycans are attached at residues asparagine 362, asparagine 369, and asparagine 387. Residues 367–464 (PQNLTMTVFQ…GSQHISLSLS (98 aa)) form the Ig-like C2-type 2 domain. A disulfide bridge links cysteine 403 with cysteine 448. Residues 484 to 504 (VGGAGATALVFLSFCIIFVVV) traverse the membrane as a helical segment. Over 505-597 (RSCRKKSARP…YEYSEINILK (93 aa)) the chain is Cytoplasmic. The disordered stretch occupies residues 514–558 (PAVGVGDTGMEDTNAVRGSASQGPLIESPADDSPPHHAPPALATP). Residues 565 to 570 (IQYASL) carry the ITIM motif motif. 2 positions are modified to phosphotyrosine: tyrosine 567 and tyrosine 590. The short motif at 588 to 593 (YEYSEI) is the SLAM-like motif element.

The protein belongs to the immunoglobulin superfamily. SIGLEC (sialic acid binding Ig-like lectin) family.

Its subcellular location is the membrane. In terms of biological role, putative adhesion molecule that mediates sialic-acid dependent binding to cells. The sialic acid recognition site may be masked by cis interactions with sialic acids on the same cell surface. This chain is Sialic acid-binding Ig-like lectin 12 (SIGLEC12), found in Pan troglodytes (Chimpanzee).